The sequence spans 434 residues: MFS-type transporter pynF (434 aa).

A compositionally biased stretch (basic and acidic residues) spans 1 to 13; that stretch reads MSHDQRSPSEEVS. The segment at 1-34 is disordered; it reads MSHDQRSPSEEVSRTALSKPASESTIVGDGHHPL. Helical transmembrane passes span 44–64, 84–104, 109–129, 138–158, 171–191, 203–223, 249–269, 280–302, 311–331, 334–354, 375–395, and 402–422; these read WLVV…LNAF, IAWI…VVGP, VGAT…LMLT, LILA…YPTI, IALG…TEII, TVRA…VLII, LLFS…FFYL, VTGA…VLTG, FNVI…LHKI, SGAI…LISL, LMMG…GALL, and WYGF…VTIL.

Belongs to the major facilitator superfamily. Monocarboxylate porter (TC 2.A.1.13) family.

Its subcellular location is the cell membrane. Its function is as follows. MFS-type transporter; part of the gene cluster that mediates the biosynthesis of pyranonigrins, a family of antioxidative compounds. May be involved in the secretion of pyranonigrins. The sequence is that of MFS-type transporter pynF from Aspergillus niger (strain ATCC MYA-4892 / CBS 513.88 / FGSC A1513).